The chain runs to 515 residues: Probable NADPH:adrenodoxin oxidoreductase, mitochondrial (515 aa).

FAD contacts are provided by A52, E73, L81, and I119. Residues 191–194 (QGNV), 236–237 (RR), and E248 each bind NADP(+). FAD contacts are provided by residues W419 and 426-428 (GSI). G426 lines the NADP(+) pocket.

It belongs to the ferredoxin--NADP reductase type 1 family. FAD is required as a cofactor.

The protein resides in the mitochondrion inner membrane. It carries out the reaction 2 reduced [adrenodoxin] + NADP(+) + H(+) = 2 oxidized [adrenodoxin] + NADPH. This is Probable NADPH:adrenodoxin oxidoreductase, mitochondrial (fdxr) from Dictyostelium discoideum (Social amoeba).